Consider the following 536-residue polypeptide: ATP synthase subunit beta (536 aa).

The tract at residues 1–57 (MVKAVSSSKGAAKVEQKKSAARSGVKKNASKSQASLQDTSSPLKTSSKNAHAKKDVQ) is disordered. The span at 30 to 49 (SKSQASLQDTSSPLKTSSKN) shows a compositional bias: polar residues. 208 to 215 (GGAGVGKT) contacts ATP.

The protein belongs to the ATPase alpha/beta chains family. As to quaternary structure, F-type ATPases have 2 components, CF(1) - the catalytic core - and CF(0) - the membrane proton channel. CF(1) has five subunits: alpha(3), beta(3), gamma(1), delta(1), epsilon(1). CF(0) has three main subunits: a(1), b(2) and c(9-12). The alpha and beta chains form an alternating ring which encloses part of the gamma chain. CF(1) is attached to CF(0) by a central stalk formed by the gamma and epsilon chains, while a peripheral stalk is formed by the delta and b chains.

Its subcellular location is the cell inner membrane. It carries out the reaction ATP + H2O + 4 H(+)(in) = ADP + phosphate + 5 H(+)(out). Its function is as follows. Produces ATP from ADP in the presence of a proton gradient across the membrane. The catalytic sites are hosted primarily by the beta subunits. In Bartonella quintana (strain Toulouse) (Rochalimaea quintana), this protein is ATP synthase subunit beta.